Here is an 809-residue protein sequence, read N- to C-terminus: Sodium/hydrogen exchanger 2 (809 aa).

Transmembrane regions (helical) follow at residues 107-127 (IVPE…IIFG), 138-158 (TDVF…YFMP), 169-189 (IFWY…VSLF), 209-229 (LFGS…FENI), 237-257 (ILVF…YNLF), 278-298 (FFVV…IAAF), and 308-328 (VIEP…AEMF). N-linked (GlcNAc...) asparagine glycosylation is present at Asn350. A run of 4 helical transmembrane segments spans residues 361–381 (YFMK…MGVS), 392–412 (AFVC…VFVL), 430–450 (FIIA…FLLP), and 459–479 (LFIT…GITI). Composition is skewed to basic and acidic residues over residues 648–660 (IRKD…ERRA) and 793–809 (RASE…SDKP). Disordered stretches follow at residues 648–700 (IRKD…EADA) and 734–809 (EVDA…SDKP).

It belongs to the monovalent cation:proton antiporter 1 (CPA1) transporter (TC 2.A.36) family. In terms of assembly, interacts with CHP1 and CHP2. In terms of tissue distribution, high levels in intestine and kidney. Strongly expressed in gastric epithelial cells, with particularly high expression levels in mucous cells.

The protein localises to the apical cell membrane. It carries out the reaction Na(+)(in) + H(+)(out) = Na(+)(out) + H(+)(in). Functionally, plasma membrane Na(+)/H(+) antiporter. Mediates the electroneutral exchange of intracellular H(+) ions for extracellular Na(+). Major apical Na(+)/H(+) exchanger in the base of the colonic crypt. Controls in the colonic crypt intracellular pH (pHi) to direct colonic epithelial cell differentiation into the absorptive enterocyte lineage at the expense of the secretory lineage. This Oryctolagus cuniculus (Rabbit) protein is Sodium/hydrogen exchanger 2 (SLC9A2).